The chain runs to 139 residues: uncharacterized protein (139 aa).

Residues 83–109 form a disordered region; it reads LIPPKKTSPATSSSLKPPRRPRGCLNG. A compositionally biased stretch (low complexity) spans 86–98; sequence PKKTSPATSSSLK.

The protein to M.pneumoniae MPN_091 and MPN_463.

This is an uncharacterized protein from Mycoplasma pneumoniae (strain ATCC 29342 / M129 / Subtype 1) (Mycoplasmoides pneumoniae).